A 245-amino-acid polypeptide reads, in one-letter code: Small ribosomal subunit protein uS2 (245 aa).

It belongs to the universal ribosomal protein uS2 family.

This Pseudomonas fluorescens (strain Pf0-1) protein is Small ribosomal subunit protein uS2.